The following is a 373-amino-acid chain: CCA-adding enzyme (373 aa).

ATP contacts are provided by Gly8 and Arg11. Gly8 and Arg11 together coordinate CTP. Positions 21 and 23 each coordinate Mg(2+). ATP contacts are provided by Arg91, Arg137, and Arg140. Residues Arg91, Arg137, and Arg140 each contribute to the CTP site.

The protein belongs to the tRNA nucleotidyltransferase/poly(A) polymerase family. Bacterial CCA-adding enzyme type 2 subfamily. Requires Mg(2+) as cofactor.

It catalyses the reaction a tRNA precursor + 2 CTP + ATP = a tRNA with a 3' CCA end + 3 diphosphate. The catalysed reaction is a tRNA with a 3' CCA end + 2 CTP + ATP = a tRNA with a 3' CCACCA end + 3 diphosphate. Functionally, catalyzes the addition and repair of the essential 3'-terminal CCA sequence in tRNAs without using a nucleic acid template. Adds these three nucleotides in the order of C, C, and A to the tRNA nucleotide-73, using CTP and ATP as substrates and producing inorganic pyrophosphate. tRNA 3'-terminal CCA addition is required both for tRNA processing and repair. Also involved in tRNA surveillance by mediating tandem CCA addition to generate a CCACCA at the 3' terminus of unstable tRNAs. While stable tRNAs receive only 3'-terminal CCA, unstable tRNAs are marked with CCACCA and rapidly degraded. This chain is CCA-adding enzyme, found in Marinobacter nauticus (strain ATCC 700491 / DSM 11845 / VT8) (Marinobacter aquaeolei).